We begin with the raw amino-acid sequence, 116 residues long: Peptidyl-tRNA hydrolase (116 aa).

Belongs to the PTH2 family.

The protein resides in the cytoplasm. The enzyme catalyses an N-acyl-L-alpha-aminoacyl-tRNA + H2O = an N-acyl-L-amino acid + a tRNA + H(+). Its function is as follows. The natural substrate for this enzyme may be peptidyl-tRNAs which drop off the ribosome during protein synthesis. This chain is Peptidyl-tRNA hydrolase, found in Methanococcus maripaludis (strain C7 / ATCC BAA-1331).